We begin with the raw amino-acid sequence, 309 residues long: Probable ABC transporter permease protein y4oQ (309 aa).

Transmembrane regions (helical) follow at residues 25–45 (VVWF…VPLV), 89–109 (LIYA…FAVL), 123–143 (LMLI…KLLY), 174–194 (VIIV…LAGL), 221–241 (LPHL…GVMA), 246–266 (IFLL…VYAY), and 278–298 (TTAI…PLIW). Residues 85 to 296 (IRVTLIYAVV…VFVLAISAPL (212 aa)) enclose the ABC transmembrane type-1 domain.

It belongs to the binding-protein-dependent transport system permease family. MalFG subfamily.

It localises to the cell inner membrane. Its function is as follows. Probably part of the binding-protein-dependent transport system y4oPQRS. This system probably transports a sugar-like molecule. Probably responsible for the translocation of the substrate across the membrane. This is Probable ABC transporter permease protein y4oQ from Sinorhizobium fredii (strain NBRC 101917 / NGR234).